A 256-amino-acid polypeptide reads, in one-letter code: Type III pantothenate kinase (256 aa).

6-13 is a binding site for ATP; that stretch reads DIGNTHIV. Residue 109 to 112 coordinates substrate; that stretch reads GADR. Asp111 (proton acceptor) is an active-site residue. Position 132 (Asp132) interacts with K(+). Thr135 is an ATP binding site. A substrate-binding site is contributed by Thr186.

This sequence belongs to the type III pantothenate kinase family. In terms of assembly, homodimer. It depends on NH4(+) as a cofactor. The cofactor is K(+).

The protein localises to the cytoplasm. It carries out the reaction (R)-pantothenate + ATP = (R)-4'-phosphopantothenate + ADP + H(+). Its pathway is cofactor biosynthesis; coenzyme A biosynthesis; CoA from (R)-pantothenate: step 1/5. In terms of biological role, catalyzes the phosphorylation of pantothenate (Pan), the first step in CoA biosynthesis. This is Type III pantothenate kinase from Fusobacterium nucleatum subsp. nucleatum (strain ATCC 25586 / DSM 15643 / BCRC 10681 / CIP 101130 / JCM 8532 / KCTC 2640 / LMG 13131 / VPI 4355).